We begin with the raw amino-acid sequence, 304 residues long: MAVHVDNVKDLAKTNEGVSVILNRYTDWKCKSGVTEAPLLPSNLGTRITDYAKTTLKGDSVALNFSDLVLSLGATVSVGTPGSVLVELINPNMDGPFQLVQGQSLSWSPGSGRPCLMIFSIHHQLTADAEPFRIRISNNGIPTKKTFARCHAYWGFDLSPRMRYYKNEPAKRIDLDVGFYKTHLSNMKQVRDYVQYTFDNSRMDGNPQLVAKSTMNVVPRIADVPKYVGIAPPSRSGNHQEATPDDWLKQYVDKDSETNKLSDVESSSDSSSLLSMRARSRRYTKNYKIPIKRHPQATGEVGTT.

Positions 257–304 (ETNKLSDVESSSDSSSLLSMRARSRRYTKNYKIPIKRHPQATGEVGTT) are disordered. Positions 264 to 277 (VESSSDSSSLLSMR) are enriched in low complexity. Positions 278–295 (ARSRRYTKNYKIPIKRHP) are enriched in basic residues.

Cell-to-cell movement and long-distance transport of the viral infection. Also acts as a suppressor of RNA-mediated gene silencing, also known as post-transcriptional gene silencing (PTGS), a mechanism of plant viral defense that limits the accumulation of viral RNAs. The sequence is that of Movement protein from Carnation ringspot virus (isolate Lommel) (CRSV).